The sequence spans 394 residues: Envelope glycoprotein D (394 aa).

The N-terminal stretch at 1-25 (MGGAAARLGAVILFVVIVGLHGVRS) is a signal peptide. The segment at 26-57 (KYALVDASLKMADPNRFRGKDLPVLDQLTDPP) is interaction with TNFRSF14. Residues 26 to 340 (KYALVDASLK…YHPPATPNNM (315 aa)) lie on the Virion surface side of the membrane. H64 is a binding site for Zn(2+). Intrachain disulfides connect C91–C214, C131–C227, and C143–C152. Residues N119 and N146 are each glycosylated (N-linked (GlcNAc...) asparagine; by host). A Zn(2+)-binding site is contributed by D240. The interval 261 to 305 (LKIAGWHGPKAPYTSTLLPPELSETPNATQPELAPEDPEDSALLE) is profusion. A disordered region spans residues 275 to 301 (STLLPPELSETPNATQPELAPEDPEDS). An N-linked (GlcNAc...) asparagine; by host glycan is attached at N287. The chain crosses the membrane as a helical span at residues 341-361 (GLIAGAVGGSLLAALVICGIV). Residues 362-394 (YWMRRHTQKAPKRIRLPHIREDDQPSSHQPLFY) are Intravirion-facing. Positions 375 to 394 (IRLPHIREDDQPSSHQPLFY) are disordered.

The protein belongs to the herpesviridae glycoprotein D family. Homodimer. Interacts with host receptor TNFRSF14. Interacts with host receptor NECTIN1. Interacts (via profusion domain) with gB; this interaction occurs in the absence of gH/gL. Interacts (via profusion domain) with gH/gL heterodimer; this interaction occurs in the absence of gB. Associates with the gB-gH/gL-gD complex. Interacts (via C-terminus) with UL11 tegument protein. Interacts (via C-terminus) with VP22 tegument protein; this interaction has been demonstrated in other strains, but might be very weak since PubMed:19279114 has failed to see it. Interacts with host RSAD2.

The protein localises to the virion membrane. The protein resides in the host Golgi apparatus. In terms of biological role, envelope glycoprotein that binds to the host cell entry receptors NECTIN1, TNFRSF14/HVEM and 3-O-sulfated heparan sulfate, promoting the virus entry into host cells. May trigger fusion with host membrane, by recruiting the fusion machinery composed of gB and gH/gL. The polypeptide is Envelope glycoprotein D (gD) (Homo sapiens (Human)).